The chain runs to 115 residues: Divalent-cation tolerance protein CutA (115 aa).

The Cu cation site is built by cysteine 19, histidine 86, and histidine 87.

It belongs to the CutA family. As to quaternary structure, homotrimer. Cu cation serves as cofactor.

The protein localises to the cytoplasm. Its function is as follows. Involved in resistance toward heavy metals. This Salmonella agona (strain SL483) protein is Divalent-cation tolerance protein CutA.